A 669-amino-acid polypeptide reads, in one-letter code: Probable pectinesterase/pectinesterase inhibitor 21 (669 aa).

The chain crosses the membrane as a helical span at residues 16–36; the sequence is IVITISSVLLISMVVAVTVGV. N-linked (GlcNAc...) asparagine glycans are attached at residues Asn-52, Asn-81, Asn-94, Asn-281, and Asn-300. Residues 52–205 form a pectinesterase inhibitor 21 region; it reads NASVKAVKDV…IELTHNGLAI (154 aa). The tract at residues 255 to 551 is pectinesterase 21; sequence DIVVAQDGSG…FTPAQYIQGD (297 aa). Residues Thr-330 and Gln-360 each coordinate substrate. The Proton donor; for pectinesterase activity role is filled by Asp-383. Cysteines 397 and 417 form a disulfide. Residue Asp-404 is the Nucleophile; for pectinesterase activity of the active site. Residue Asn-416 is glycosylated (N-linked (GlcNAc...) asparagine). Substrate contacts are provided by Arg-472 and Trp-474. The segment at 615-669 is disordered; sequence AYTGTASPESSIKVSSSTETASPESSFTEASTASPESSIMVASTESSGSFFSMFT. The span at 616–628 shows a compositional bias: polar residues; it reads YTGTASPESSIKV. Residues 629 to 652 show a composition bias toward low complexity; sequence SSSTETASPESSFTEASTASPESS. The span at 654 to 669 shows a compositional bias: polar residues; that stretch reads MVASTESSGSFFSMFT.

This sequence in the N-terminal section; belongs to the PMEI family. The protein in the C-terminal section; belongs to the pectinesterase family. As to expression, expressed in flower buds.

The protein resides in the membrane. It catalyses the reaction [(1-&gt;4)-alpha-D-galacturonosyl methyl ester](n) + n H2O = [(1-&gt;4)-alpha-D-galacturonosyl](n) + n methanol + n H(+). Its pathway is glycan metabolism; pectin degradation; 2-dehydro-3-deoxy-D-gluconate from pectin: step 1/5. In terms of biological role, acts in the modification of cell walls via demethylesterification of cell wall pectin. This Arabidopsis thaliana (Mouse-ear cress) protein is Probable pectinesterase/pectinesterase inhibitor 21 (PME21).